The chain runs to 970 residues: Insulin-degrading enzyme-like 1, peroxisomal (970 aa).

Residue His69 participates in Zn(2+) binding. The active-site Proton acceptor is Glu72. Zn(2+) is bound at residue His73. The active site involves Glu143. Glu150 is a binding site for Zn(2+).

It belongs to the peptidase M16 family. Requires Zn(2+) as cofactor.

It is found in the peroxisome. Its function is as follows. Peptidase that might be involved in pathogen or wound response. Not required for peroxisome biogenesis, indole-3-butyric acid (IBA) metabolism, fatty acid beta-oxidation or degradation of glyoxylate cycle enzymes during seedling development. The sequence is that of Insulin-degrading enzyme-like 1, peroxisomal (PXM16) from Arabidopsis thaliana (Mouse-ear cress).